Here is a 782-residue protein sequence, read N- to C-terminus: uncharacterized protein (782 aa).

Residues 22-50 constitute a DNA-binding region (zn(2)-C6 fungal-type); the sequence is CRECHRLKLKCDRVWPCENCKKRGIPNLC. Disordered stretches follow at residues 105–126 and 645–665; these read GEKPAEDTKDENRSQPIHDPDH and VPSSRPNSKSPDDSSMRAEKA. Residues 654–665 show a composition bias toward basic and acidic residues; that stretch reads SPDDSSMRAEKA.

Its subcellular location is the nucleus. This is an uncharacterized protein from Schizosaccharomyces pombe (strain 972 / ATCC 24843) (Fission yeast).